The following is a 910-amino-acid chain: Alanine--tRNA ligase (910 aa).

Positions Arg488–Ala505 are enriched in basic and acidic residues. The segment at Arg488–Lys507 is disordered. Zn(2+) contacts are provided by His614, His618, Cys718, and His722.

Belongs to the class-II aminoacyl-tRNA synthetase family. Requires Zn(2+) as cofactor.

It localises to the cytoplasm. The catalysed reaction is tRNA(Ala) + L-alanine + ATP = L-alanyl-tRNA(Ala) + AMP + diphosphate. Functionally, catalyzes the attachment of alanine to tRNA(Ala) in a two-step reaction: alanine is first activated by ATP to form Ala-AMP and then transferred to the acceptor end of tRNA(Ala). Also edits incorrectly charged Ser-tRNA(Ala) and Gly-tRNA(Ala) via its editing domain. The polypeptide is Alanine--tRNA ligase (Methanococcus aeolicus (strain ATCC BAA-1280 / DSM 17508 / OCM 812 / Nankai-3)).